The chain runs to 332 residues: Fructose-1,6-bisphosphatase class 1 1 (332 aa).

Mg(2+) is bound by residues glutamate 92, aspartate 115, leucine 117, and aspartate 118. Residues 118 to 121 (DGSS), asparagine 211, tyrosine 244, 262 to 264 (YLY), and lysine 274 contribute to the substrate site. Residue glutamate 280 coordinates Mg(2+).

Belongs to the FBPase class 1 family. As to quaternary structure, homotetramer. The cofactor is Mg(2+).

It localises to the cytoplasm. It carries out the reaction beta-D-fructose 1,6-bisphosphate + H2O = beta-D-fructose 6-phosphate + phosphate. It participates in carbohydrate biosynthesis; gluconeogenesis. This Christiangramia forsetii (strain DSM 17595 / CGMCC 1.15422 / KT0803) (Gramella forsetii) protein is Fructose-1,6-bisphosphatase class 1 1.